A 350-amino-acid polypeptide reads, in one-letter code: Heat-inducible transcription repressor HrcA (350 aa).

This sequence belongs to the HrcA family.

Its function is as follows. Negative regulator of class I heat shock genes (grpE-dnaK-dnaJ and groELS operons). Prevents heat-shock induction of these operons. This Limosilactobacillus reuteri (strain DSM 20016) (Lactobacillus reuteri) protein is Heat-inducible transcription repressor HrcA.